The chain runs to 308 residues: HTH-type transcriptional activator AllS (308 aa).

Residues F2 to T59 form the HTH lysR-type domain. Positions F19–K38 form a DNA-binding region, H-T-H motif.

The protein belongs to the LysR transcriptional regulatory family.

In terms of biological role, positive regulator essential for the expression of allD operon. Binds to the allD promoter. This chain is HTH-type transcriptional activator AllS (allS), found in Escherichia coli O6:K15:H31 (strain 536 / UPEC).